The following is a 404-amino-acid chain: uncharacterized protein (404 aa).

Residues Met-1–Gly-22 are compositionally biased toward polar residues. The interval Met-1–Arg-110 is disordered. Thr-47 carries the post-translational modification Phosphothreonine. A compositionally biased stretch (polar residues) spans Ser-87–Pro-104. A PHD-type zinc finger spans residues Val-117–Lys-166.

This is an uncharacterized protein from Schizosaccharomyces pombe (strain 972 / ATCC 24843) (Fission yeast).